The primary structure comprises 49 residues: Large ribosomal subunit protein bL33 (49 aa).

It belongs to the bacterial ribosomal protein bL33 family.

This is Large ribosomal subunit protein bL33 from Desulforudis audaxviator (strain MP104C).